A 580-amino-acid chain; its full sequence is mRNA cap guanine-N(7) methyltransferase (580 aa).

Polar residues-rich tracts occupy residues 1–17 (MSGSKQGSEKASITSLI) and 25–53 (EATSVSTQNQSPKTQITQTENVEVQNSDL). The segment at 1–222 (MSGSKQGSEK…PVEAQPYSRL (222 aa)) is disordered. The segment covering 54–67 (KVTENKPKNTEMKP) has biased composition (basic and acidic residues). Positions 69–90 (DPNTNASTTENTPITTSNAQVS) are enriched in polar residues. The segment covering 102-154 (REPEEAQNRYDRYVPRVDNRRRGEPRVAEVRQDPRYAKYLRQDQEERRIRRPD) has biased composition (basic and acidic residues). A compositionally biased stretch (acidic residues) spans 191-214 (ESEENGDEQQGDDEEETPGNEEPV). The region spanning 271–579 (SPIYKLRNFN…FYLGFAFEKL (309 aa)) is the mRNA cap 0 methyltransferase domain. 280-281 (NN) is an mRNA binding site. Lysine 284, cysteine 308, aspartate 330, aspartate 376, glutamine 406, and tyrosine 411 together coordinate S-adenosyl-L-methionine.

Belongs to the class I-like SAM-binding methyltransferase superfamily. mRNA cap 0 methyltransferase family.

Its subcellular location is the nucleus. The catalysed reaction is a 5'-end (5'-triphosphoguanosine)-ribonucleoside in mRNA + S-adenosyl-L-methionine = a 5'-end (N(7)-methyl 5'-triphosphoguanosine)-ribonucleoside in mRNA + S-adenosyl-L-homocysteine. In terms of biological role, responsible for methylating the 5'-cap structure of mRNAs. This chain is mRNA cap guanine-N(7) methyltransferase (ABD1), found in Meyerozyma guilliermondii (strain ATCC 6260 / CBS 566 / DSM 6381 / JCM 1539 / NBRC 10279 / NRRL Y-324) (Yeast).